A 361-amino-acid chain; its full sequence is Peptide chain release factor 1 (361 aa).

Residue Gln-235 is modified to N5-methylglutamine.

This sequence belongs to the prokaryotic/mitochondrial release factor family. Methylated by PrmC. Methylation increases the termination efficiency of RF1.

The protein localises to the cytoplasm. Its function is as follows. Peptide chain release factor 1 directs the termination of translation in response to the peptide chain termination codons UAG and UAA. In Rhodopseudomonas palustris (strain BisB18), this protein is Peptide chain release factor 1.